The following is a 125-amino-acid chain: Small ribosomal subunit protein uS12 (125 aa).

Asp89 is modified (3-methylthioaspartic acid). The segment at 105-125 (QGVKDRKQSRSKYGAKKPKAK) is disordered. Residues 113–125 (SRSKYGAKKPKAK) are compositionally biased toward basic residues.

It belongs to the universal ribosomal protein uS12 family. Part of the 30S ribosomal subunit. Contacts proteins S8 and S17. May interact with IF1 in the 30S initiation complex.

Its function is as follows. With S4 and S5 plays an important role in translational accuracy. Interacts with and stabilizes bases of the 16S rRNA that are involved in tRNA selection in the A site and with the mRNA backbone. Located at the interface of the 30S and 50S subunits, it traverses the body of the 30S subunit contacting proteins on the other side and probably holding the rRNA structure together. The combined cluster of proteins S8, S12 and S17 appears to hold together the shoulder and platform of the 30S subunit. The protein is Small ribosomal subunit protein uS12 of Delftia acidovorans (strain DSM 14801 / SPH-1).